The sequence spans 302 residues: Putative S-adenosyl-L-methionine-dependent methyltransferase MAP_1622c (302 aa).

S-adenosyl-L-methionine contacts are provided by residues Asp-129 and 158-159 (DL).

It belongs to the UPF0677 family.

Functionally, exhibits S-adenosyl-L-methionine-dependent methyltransferase activity. In Mycolicibacterium paratuberculosis (strain ATCC BAA-968 / K-10) (Mycobacterium paratuberculosis), this protein is Putative S-adenosyl-L-methionine-dependent methyltransferase MAP_1622c.